Here is a 101-residue protein sequence, read N- to C-terminus: Protein Tat (101 aa).

A compositionally biased stretch (basic and acidic residues) spans 1-12 (MEPVDPRLEPWK). Residues 1–20 (MEPVDPRLEPWKHPGSQPKT) are disordered. The tract at residues 1 to 24 (MEPVDPRLEPWKHPGSQPKTACTT) is interaction with human CREBBP. Residues 1–48 (MEPVDPRLEPWKHPGSQPKTACTTCYCKKCCFHCQVCFTKKALGISYG) form a transactivation region. Zn(2+) is bound by residues C22, C25, and C27. The interval 22 to 37 (CTTCYCKKCCFHCQVC) is cysteine-rich. K28 carries the N6-acetyllysine; by host PCAF modification. C30, H33, C34, and C37 together coordinate Zn(2+). Residues 38–48 (FTKKALGISYG) form a core region. Residues 47–101 (YGRKKRRQRRRAPEDSQTHQVSLPKQPAPQFRGDPTGPKESKKKVERETETHPVD) form a disordered region. The short motif at 49-57 (RKKRRQRRR) is the Nuclear localization signal, RNA-binding (TAR), and protein transduction element. Positions 49–86 (RKKRRQRRRAPEDSQTHQVSLPKQPAPQFRGDPTGPKE) are interaction with the host capping enzyme RNGTT. 2 positions are modified to N6-acetyllysine; by host EP300 and GCN5L2: K50 and K51. R52 and R53 each carry asymmetric dimethylarginine; by host PRMT6. A Glycyl lysine isopeptide (Lys-Gly) (interchain with G-Cter in ubiquitin) cross-link involves residue K71. The Cell attachment site motif lies at 78-80 (RGD). The segment covering 83–101 (GPKESKKKVERETETHPVD) has biased composition (basic and acidic residues).

This sequence belongs to the lentiviruses Tat family. Interacts with host CCNT1. Associates with the P-TEFb complex composed at least of Tat, P-TEFb (CDK9 and CCNT1), TAR RNA, RNA Pol II. Recruits the HATs CREBBP, TAF1/TFIID, EP300, PCAF and GCN5L2. Interacts with host KAT5/Tip60; this interaction targets the latter to degradation. Interacts with the host deacetylase SIRT1. Interacts with host capping enzyme RNGTT; this interaction stimulates RNGTT. Binds to host KDR, and to the host integrins ITGAV/ITGB3 and ITGA5/ITGB1. Interacts with host KPNB1/importin beta-1 without previous binding to KPNA1/importin alpha-1. Interacts with EIF2AK2. Interacts with host nucleosome assembly protein NAP1L1; this interaction may be required for the transport of Tat within the nucleus, since the two proteins interact at the nuclear rim. Interacts with host C1QBP/SF2P32; this interaction involves lysine-acetylated Tat. Interacts with the host chemokine receptors CCR2, CCR3 and CXCR4. Interacts with host DPP4/CD26; this interaction may trigger an anti-proliferative effect. Interacts with host LDLR. Interacts with the host extracellular matrix metalloproteinase MMP1. Interacts with host PRMT6; this interaction mediates Tat's methylation. Interacts with, and is ubiquitinated by MDM2/Hdm2. Interacts with host PSMC3 and HTATIP2. Interacts with STAB1; this interaction may overcome SATB1-mediated repression of IL2 and IL2RA (interleukin) in T cells by binding to the same domain than HDAC1. Interacts (when acetylated) with human CDK13, thereby increasing HIV-1 mRNA splicing and promoting the production of the doubly spliced HIV-1 protein Nef. Interacts with host TBP; this interaction modulates the activity of transcriptional pre-initiation complex. Interacts with host RELA. Interacts with host PLSCR1; this interaction negatively regulates Tat transactivation activity by altering its subcellular distribution. Post-translationally, asymmetrical arginine methylation by host PRMT6 seems to diminish the transactivation capacity of Tat and affects the interaction with host CCNT1. Acetylation by EP300, CREBBP, GCN5L2/GCN5 and PCAF regulates the transactivation activity of Tat. EP300-mediated acetylation of Lys-50 promotes dissociation of Tat from the TAR RNA through the competitive binding to PCAF's bromodomain. In addition, the non-acetylated Tat's N-terminus can also interact with PCAF. PCAF-mediated acetylation of Lys-28 enhances Tat's binding to CCNT1. Lys-50 is deacetylated by SIRT1. In terms of processing, polyubiquitination by host MDM2 does not target Tat to degradation, but activates its transactivation function and fosters interaction with CCNT1 and TAR RNA. Post-translationally, phosphorylated by EIF2AK2 on serine and threonine residues adjacent to the basic region important for TAR RNA binding and function. Phosphorylation of Tat by EIF2AK2 is dependent on the prior activation of EIF2AK2 by dsRNA.

Its subcellular location is the host nucleus. It localises to the host nucleolus. The protein resides in the host cytoplasm. The protein localises to the secreted. Transcriptional activator that increases RNA Pol II processivity, thereby increasing the level of full-length viral transcripts. Recognizes a hairpin structure at the 5'-LTR of the nascent viral mRNAs referred to as the transactivation responsive RNA element (TAR) and recruits the cyclin T1-CDK9 complex (P-TEFb complex) that will in turn hyperphosphorylate the RNA polymerase II to allow efficient elongation. The CDK9 component of P-TEFb and other Tat-activated kinases hyperphosphorylate the C-terminus of RNA Pol II that becomes stabilized and much more processive. Other factors such as HTATSF1/Tat-SF1, SUPT5H/SPT5, and HTATIP2 are also important for Tat's function. Besides its effect on RNA Pol II processivity, Tat induces chromatin remodeling of proviral genes by recruiting the histone acetyltransferases (HATs) CREBBP, EP300 and PCAF to the chromatin. This also contributes to the increase in proviral transcription rate, especially when the provirus integrates in transcriptionally silent region of the host genome. To ensure maximal activation of the LTR, Tat mediates nuclear translocation of NF-kappa-B by interacting with host RELA. Through its interaction with host TBP, Tat may also modulate transcription initiation. Tat can reactivate a latently infected cell by penetrating in it and transactivating its LTR promoter. In the cytoplasm, Tat is thought to act as a translational activator of HIV-1 mRNAs. In terms of biological role, extracellular circulating Tat can be endocytosed by surrounding uninfected cells via the binding to several surface receptors such as CD26, CXCR4, heparan sulfate proteoglycans (HSPG) or LDLR. Neurons are rarely infected, but they internalize Tat via their LDLR. Through its interaction with nuclear HATs, Tat is potentially able to control the acetylation-dependent cellular gene expression. Modulates the expression of many cellular genes involved in cell survival, proliferation or in coding for cytokines or cytokine receptors. Tat plays a role in T-cell and neurons apoptosis. Tat induced neurotoxicity and apoptosis probably contribute to neuroAIDS. Circulating Tat also acts as a chemokine-like and/or growth factor-like molecule that binds to specific receptors on the surface of the cells, affecting many cellular pathways. In the vascular system, Tat binds to ITGAV/ITGB3 and ITGA5/ITGB1 integrins dimers at the surface of endothelial cells and competes with bFGF for heparin-binding sites, leading to an excess of soluble bFGF. In Human immunodeficiency virus type 1 group M subtype B (isolate MN) (HIV-1), this protein is Protein Tat.